The following is a 160-amino-acid chain: Small ribosomal subunit protein uS9 (160 aa).

It belongs to the universal ribosomal protein uS9 family.

This Xanthobacter autotrophicus (strain ATCC BAA-1158 / Py2) protein is Small ribosomal subunit protein uS9.